A 536-amino-acid polypeptide reads, in one-letter code: MLLCDGLGPEPPRQRHRNRTSAARIRKRPKCCCGDGGSGNQAEQPGGIVSNPISYGQSLTTLARVTAAALTTAAMLHTTNALAATGSSSASNSSTGGIALPLGTATPATHELNATQPFGGSGLNFNESGAGLSDHHHHQQHNPDEDWLDNIVWVFKAFVMLLIIIAAICGNLLVIISVMRVRKLRVITNYFVVSLAMADIMVAIMAMTFNFSVQVTGRWNFSPFLCDLWNSLDVYFSTASILHLCCISVDRYYAIVKPLKYPISMTKRVVGIMLLNTWISPALLSFLPIFIGWYTTPQHQQFVIQNPTQCSFVVNKYYAVISSSISFWIPCTIMIFTYLAIFREANRQEKQLMMRHGNAMLMHRPSMQPSGEALSGSGSSKTLTLHEVEQEHTPTKDKHLIKMKREHKAARTLGIIMGTFILCWLPFFLWYTLSMTCEECQVPDIVVSILFWIGYFNSTLNPLIYAYFNRDFREAFRNTLLCLFCNWWKDRHLPLDIDIRRSSLRYDQRAKSVYSESYLNSTTPSHRRQSQMVDNL.

Positions 1–26 (MLLCDGLGPEPPRQRHRNRTSAARIR) are disordered. Residues 1-157 (MLLCDGLGPE…LDNIVWVFKA (157 aa)) are Extracellular-facing. The span at 14–26 (QRHRNRTSAARIR) shows a compositional bias: basic residues. N-linked (GlcNAc...) asparagine glycosylation is found at Asn18, Asn92, Asn113, and Asn126. A helical membrane pass occupies residues 158–178 (FVMLLIIIAAICGNLLVIISV). Topologically, residues 179-190 (MRVRKLRVITNY) are cytoplasmic. A helical transmembrane segment spans residues 191–211 (FVVSLAMADIMVAIMAMTFNF). Residues 212 to 233 (SVQVTGRWNFSPFLCDLWNSLD) are Extracellular-facing. The helical transmembrane segment at 234–256 (VYFSTASILHLCCISVDRYYAIV) threads the bilayer. The Cytoplasmic portion of the chain corresponds to 257 to 270 (KPLKYPISMTKRVV). The helical transmembrane segment at 271 to 291 (GIMLLNTWISPALLSFLPIFI) threads the bilayer. Residues 292-320 (GWYTTPQHQQFVIQNPTQCSFVVNKYYAV) lie on the Extracellular side of the membrane. The helical transmembrane segment at 321–341 (ISSSISFWIPCTIMIFTYLAI) threads the bilayer. The Cytoplasmic portion of the chain corresponds to 342-412 (FREANRQEKQ…MKREHKAART (71 aa)). Residues 413-433 (LGIIMGTFILCWLPFFLWYTL) traverse the membrane as a helical segment. Over 434–444 (SMTCEECQVPD) the chain is Extracellular. A helical transmembrane segment spans residues 445-465 (IVVSILFWIGYFNSTLNPLIY). Residues 466 to 536 (AYFNRDFREA…RRQSQMVDNL (71 aa)) are Cytoplasmic-facing.

It belongs to the G-protein coupled receptor 1 family. As to expression, in the adult, expressed in the superior protocerebrum and the optic lobe medulla of the central nervous system, nurse cells of egg chambers in the ovary at oogenic stages 1-10, and spermatogonia and spermatocytes in the testis. Expressed in the oviduct epithelium. Also expressed in the spermatheca. Expressed in embryonic and larval ventral nerve cord and brain lobe, embryonic and larval salivary glands and larval imaginal disk and midgut. Also expressed in larval synaptic boutons.

The protein resides in the cell membrane. Autoreceptor for octopamine (OA), which is a neurotransmitter, neurohormone, and neuromodulator in invertebrates. Essential for ovulation and fertilization. During ovulation it mediates the OA-induced relaxation of the oviduct visceral muscles, by increasing cAMP levels and activating effectors such as calmodulin-dependent kinase II (CaMKII) and cAMP-dependent protein kinase A (PKA) pathways. Positively regulates synaptic growth; an action that is antagonized by Octbeta1R. In Drosophila melanogaster (Fruit fly), this protein is Octopamine receptor beta-2R.